We begin with the raw amino-acid sequence, 197 residues long: Imidazoleglycerol-phosphate dehydratase (197 aa).

The protein belongs to the imidazoleglycerol-phosphate dehydratase family.

It localises to the cytoplasm. It carries out the reaction D-erythro-1-(imidazol-4-yl)glycerol 3-phosphate = 3-(imidazol-4-yl)-2-oxopropyl phosphate + H2O. It participates in amino-acid biosynthesis; L-histidine biosynthesis; L-histidine from 5-phospho-alpha-D-ribose 1-diphosphate: step 6/9. The protein is Imidazoleglycerol-phosphate dehydratase of Pseudomonas syringae pv. syringae (strain B728a).